The primary structure comprises 74 residues: MASLTLEEIETMLDDMKKKLNVVNASVITSDSVSPAKHDDLIALHAHVMRSPSFSISEMDEIVQELGQLRGRKS.

The protein belongs to the UPF0435 family.

The chain is UPF0435 protein ABC2298 from Shouchella clausii (strain KSM-K16) (Alkalihalobacillus clausii).